The sequence spans 297 residues: 4-hydroxy-tetrahydrodipicolinate synthase (297 aa).

Residue Thr-49 participates in pyruvate binding. Residue Tyr-137 is the Proton donor/acceptor of the active site. The active-site Schiff-base intermediate with substrate is Lys-166. A pyruvate-binding site is contributed by Ile-208.

Belongs to the DapA family. Homotetramer; dimer of dimers.

It is found in the cytoplasm. The enzyme catalyses L-aspartate 4-semialdehyde + pyruvate = (2S,4S)-4-hydroxy-2,3,4,5-tetrahydrodipicolinate + H2O + H(+). The protein operates within amino-acid biosynthesis; L-lysine biosynthesis via DAP pathway; (S)-tetrahydrodipicolinate from L-aspartate: step 3/4. In terms of biological role, catalyzes the condensation of (S)-aspartate-beta-semialdehyde [(S)-ASA] and pyruvate to 4-hydroxy-tetrahydrodipicolinate (HTPA). The protein is 4-hydroxy-tetrahydrodipicolinate synthase of Chlorobium phaeobacteroides (strain BS1).